The chain runs to 1358 residues: DNA-directed RNA polymerase subunit beta (1358 aa).

Belongs to the RNA polymerase beta chain family. The RNAP catalytic core consists of 2 alpha, 1 beta, 1 beta' and 1 omega subunit. When a sigma factor is associated with the core the holoenzyme is formed, which can initiate transcription.

It catalyses the reaction RNA(n) + a ribonucleoside 5'-triphosphate = RNA(n+1) + diphosphate. Its function is as follows. DNA-dependent RNA polymerase catalyzes the transcription of DNA into RNA using the four ribonucleoside triphosphates as substrates. The protein is DNA-directed RNA polymerase subunit beta of Francisella tularensis subsp. tularensis (strain FSC 198).